The chain runs to 287 residues: Nucleotide-binding protein Gbem_0872 (287 aa).

Residue 8 to 15 (GLSGSGKS) participates in ATP binding. 59–62 (DIRS) contacts GTP.

It belongs to the RapZ-like family.

Displays ATPase and GTPase activities. This Citrifermentans bemidjiense (strain ATCC BAA-1014 / DSM 16622 / JCM 12645 / Bem) (Geobacter bemidjiensis) protein is Nucleotide-binding protein Gbem_0872.